Here is a 352-residue protein sequence, read N- to C-terminus: Cyclin-dependent kinase 7 (352 aa).

The Protein kinase domain maps to 18-301 (YEKLDFLGEG…ASQALRKRYF (284 aa)). Residues 24–32 (LGEGQFATV) and Lys-47 each bind ATP. Residue Asp-143 is the Proton acceptor of the active site. Ser-170 carries the phosphoserine; by CDK1 and CDK2 modification. A Phosphothreonine; by CDK2 modification is found at Thr-176.

Belongs to the protein kinase superfamily. CMGC Ser/Thr protein kinase family. CDC2/CDKX subfamily. Probably associates with cyclin-H (ccnh) and mat1 to form a multimeric active enzyme. Phosphorylation of Ser-170 during mitosis inactivates the enzyme. Phosphorylation of Thr-176 is required for activity. Phosphorylated at Ser-170 and Thr-176 by CDK2.

Its subcellular location is the nucleus. It carries out the reaction L-seryl-[protein] + ATP = O-phospho-L-seryl-[protein] + ADP + H(+). The catalysed reaction is L-threonyl-[protein] + ATP = O-phospho-L-threonyl-[protein] + ADP + H(+). It catalyses the reaction [DNA-directed RNA polymerase] + ATP = phospho-[DNA-directed RNA polymerase] + ADP + H(+). Its activity is regulated as follows. Phosphorylation at Thr-176 is required for enzymatic activity. In terms of biological role, serine/threonine kinase involved in cell cycle control and in RNA polymerase II-mediated RNA transcription. Cyclin-dependent kinases (CDKs) are activated by the binding to a cyclin and mediate the progression through the cell cycle. Each different complex controls a specific transition between 2 subsequent phases in the cell cycle. Required for both activation and complex formation of cdk1/cyclin-B during G2-M transition, and for activation of cdk2/cyclins during G1-S transition (but not complex formation). cdk7 is the catalytic subunit of the CDK-activating kinase (CAK) complex. CAK activates the cyclin-associated kinases cdk1, cdk2, cdk4 and cdk6 by threonine phosphorylation, thus regulating cell cycle progression. Initiates transcription by RNA polymerase II by mediating phosphorylation of polr2a at 'Ser-5' of the repetitive C-terminal domain (CTD) when polr2a is in complex with DNA, promoting dissociation from DNA and initiation. CAK complexed to the core-TFIIH basal transcription factor activates RNA polymerase II by serine phosphorylation of the CTD of polr2a, allowing its escape from the promoter and elongation of the transcripts. The protein is Cyclin-dependent kinase 7 (cdk7) of Xenopus laevis (African clawed frog).